A 346-amino-acid polypeptide reads, in one-letter code: Elongation factor Ts (346 aa).

The involved in Mg(2+) ion dislocation from EF-Tu stretch occupies residues 80-83 (TDFV).

Belongs to the EF-Ts family.

Its subcellular location is the cytoplasm. Functionally, associates with the EF-Tu.GDP complex and induces the exchange of GDP to GTP. It remains bound to the aminoacyl-tRNA.EF-Tu.GTP complex up to the GTP hydrolysis stage on the ribosome. This is Elongation factor Ts from Streptococcus pyogenes serotype M1.